A 358-amino-acid chain; its full sequence is G-protein coupled receptor 20 (358 aa).

The Extracellular segment spans residues 1–48; sequence MPSVSPAGPSAGAVPNATAVTTVRTNASGLEVPLFHLFARLDEELHGT. 2 N-linked (GlcNAc...) asparagine glycosylation sites follow: Asn16 and Asn26. A helical membrane pass occupies residues 49-69; the sequence is FPGLWLALMAVHGAIFLAGLV. The Cytoplasmic portion of the chain corresponds to 70–86; sequence LNGLALYVFCCRTRAKT. Residues 87-107 traverse the membrane as a helical segment; it reads PSVIYTINLVVTDLLVGLSLP. Over 108-125 the chain is Extracellular; sequence TRFAVYYGARGCLRCAFP. The chain crosses the membrane as a helical span at residues 126-146; it reads HVLGYFLNMHCSILFLTCICV. Residues 147-168 are Cytoplasmic-facing; the sequence is DRYLAIVRPEGSRRCRQPACAR. The chain crosses the membrane as a helical span at residues 169 to 189; it reads AVCAFVWLAAGAVTLSVLGVT. The Extracellular segment spans residues 190–196; that stretch reads GSRPCCR. A helical transmembrane segment spans residues 197–217; that stretch reads VFALTVLEFLLPLLVISVFTG. Residues 218 to 238 are Cytoplasmic-facing; it reads RIMCALSRPGLLHQGRQRRVR. A helical membrane pass occupies residues 239-259; sequence AMQLLLTVLIIFLVCFTPFHA. The Extracellular portion of the chain corresponds to 260 to 275; the sequence is RQVAVALWPDMPHHTS. Residues 276–296 traverse the membrane as a helical segment; it reads LVVYHVAVTLSSLNSCMDPIV. Topologically, residues 297-358 are cytoplasmic; that stretch reads YCFVTSGFQA…TQALANGPEA (62 aa). The segment at 315–339 is disordered; that stretch reads HGEREPSSGDVVSMHRSSKGSGRHH. A compositionally biased stretch (basic residues) spans 330-339; that stretch reads RSSKGSGRHH.

The protein belongs to the G-protein coupled receptor 1 family. In terms of tissue distribution, ubiquitous with highest levels in intestinal tissues. In the brain detected in thalamus, putamen, and caudate, but not in frontal cortex, pons and hypothalamus.

The protein resides in the cell membrane. Its function is as follows. Orphan receptor with constitutive G(i) signaling activity that activate cyclic AMP. The sequence is that of G-protein coupled receptor 20 (GPR20) from Homo sapiens (Human).